Here is a 238-residue protein sequence, read N- to C-terminus: MITVYGYVPAWGIPDISPYVTKVVNYLSFTGIEFEYKTQDLATLDQDSPHGKLPYIVDSDGTKVGDSNTIIEYLKNKFGDKLDADLSKQQLAQALAFHRLIEEHLYWSGIIQARWQDDAGWETYIPFIVQGAEVTPEMRVGLDAFRARILDGFNGQGMGRRSEEVVAEFFRADIDALSDFLDDKPFILGDKVHSIDASLYSTLRHIADQPQQWLGSGYVQTKPNLVDYLERIRKQYDI.

The GST N-terminal domain occupies 7–82; sequence YVPAWGIPDI…YLKNKFGDKL (76 aa). In terms of domain architecture, GST C-terminal spans 118 to 238; sequence DAGWETYIPF…LERIRKQYDI (121 aa).

It belongs to the GST superfamily. As to quaternary structure, homodimer.

The catalysed reaction is 2-glutathionyl-2-methylbut-3-en-1-ol = (3R)-3,4-epoxy-3-methylbut-1-ene + glutathione. With respect to regulation, activity is inhibited by 1,2-epoxyhexane. Its function is as follows. Involved in isoprene degradation. Catalyzes the glutathione-dependent ring opening of various epoxides. The highest conversion rate is observed with the physiological substrate, 3,4-epoxy-3-methyl-1-butene, which is the primary oxidation product of isoprene. It can also use other epoxides, including epoxyethane, epoxypropane, epithiopropane, epichlorohydrin, epifluorohydrin, epibromohydrin, 1,2-epoxybutane, 1,2-epoxyhexane, cis-2,3-epoxybutane, cis-1,2-dichloroepoxyethane and trans-1,2-dichloroepoxyethane. This chain is Isoprene-epoxide--glutathione S-transferase, found in Rhodococcus sp. (strain AD45).